Here is a 592-residue protein sequence, read N- to C-terminus: A-type ATP synthase subunit A (592 aa).

233-240 provides a ligand contact to ATP; the sequence is GPFGSGKT.

This sequence belongs to the ATPase alpha/beta chains family. As to quaternary structure, has multiple subunits with at least A(3), B(3), C, D, E, F, H, I and proteolipid K(x).

It is found in the cell membrane. The enzyme catalyses ATP + H2O + 4 H(+)(in) = ADP + phosphate + 5 H(+)(out). In terms of biological role, component of the A-type ATP synthase that produces ATP from ADP in the presence of a proton gradient across the membrane. The A chain is the catalytic subunit. This is A-type ATP synthase subunit A from Saccharolobus islandicus (strain Y.N.15.51 / Yellowstone #2) (Sulfolobus islandicus).